A 212-amino-acid polypeptide reads, in one-letter code: Large ribosomal subunit protein uL3 (212 aa).

The segment at 119 to 146 (YQGNIKRWGQSRGPETHGSRYHRIPGSM) is disordered.

Belongs to the universal ribosomal protein uL3 family. In terms of assembly, part of the 50S ribosomal subunit. Forms a cluster with proteins L14 and L19.

One of the primary rRNA binding proteins, it binds directly near the 3'-end of the 23S rRNA, where it nucleates assembly of the 50S subunit. The polypeptide is Large ribosomal subunit protein uL3 (Lactobacillus helveticus (strain DPC 4571)).